The following is a 306-amino-acid chain: N-acetylmuramic acid 6-phosphate etherase (306 aa).

The SIS domain occupies 59–222 (ISEALRQGGR…STGAMVQLGK (164 aa)). Glutamate 87 functions as the Proton donor in the catalytic mechanism. Glutamate 118 is an active-site residue.

Belongs to the GCKR-like family. MurNAc-6-P etherase subfamily. As to quaternary structure, homodimer.

The catalysed reaction is N-acetyl-D-muramate 6-phosphate + H2O = N-acetyl-D-glucosamine 6-phosphate + (R)-lactate. The protein operates within amino-sugar metabolism; N-acetylmuramate degradation. Its function is as follows. Specifically catalyzes the cleavage of the D-lactyl ether substituent of MurNAc 6-phosphate, producing GlcNAc 6-phosphate and D-lactate. The chain is N-acetylmuramic acid 6-phosphate etherase from Gloeothece citriformis (strain PCC 7424) (Cyanothece sp. (strain PCC 7424)).